Consider the following 657-residue polypeptide: Putative GreA-associated domains protein (657 aa).

The GRAD2 domain occupies 1-152; the sequence is MDTRDLTAYS…EQEGNKEKAT (152 aa). A GRAD1 domain is found at 153–657; that stretch reads EFYKKALYRF…TAGSFGTLWE (505 aa).

The protein is Putative GreA-associated domains protein of Treponema pallidum (strain Nichols).